A 217-amino-acid chain; its full sequence is Uracil-DNA glycosylase (217 aa).

Catalysis depends on Asp-62, which acts as the Proton acceptor.

This sequence belongs to the uracil-DNA glycosylase (UDG) superfamily. UNG family.

Its subcellular location is the cytoplasm. The catalysed reaction is Hydrolyzes single-stranded DNA or mismatched double-stranded DNA and polynucleotides, releasing free uracil.. Functionally, excises uracil residues from the DNA which can arise as a result of misincorporation of dUMP residues by DNA polymerase or due to deamination of cytosine. The sequence is that of Uracil-DNA glycosylase from Streptococcus thermophilus (strain ATCC BAA-491 / LMD-9).